The sequence spans 51 residues: Large ribosomal subunit protein eL39 (51 aa).

Belongs to the eukaryotic ribosomal protein eL39 family. In terms of assembly, part of the 50S ribosomal subunit.

The sequence is that of Large ribosomal subunit protein eL39 from Pyrococcus furiosus (strain ATCC 43587 / DSM 3638 / JCM 8422 / Vc1).